We begin with the raw amino-acid sequence, 125 residues long: Small ribosomal subunit protein eS8 (125 aa).

The disordered stretch occupies residues Met1–Arg20.

It belongs to the eukaryotic ribosomal protein eS8 family. As to quaternary structure, part of the 30S ribosomal subunit.

The sequence is that of Small ribosomal subunit protein eS8 (rps8e) from Archaeoglobus fulgidus (strain ATCC 49558 / DSM 4304 / JCM 9628 / NBRC 100126 / VC-16).